Reading from the N-terminus, the 238-residue chain is uncharacterized protein (238 aa).

The next 4 helical transmembrane spans lie at 16-36, 44-64, 81-101, and 123-143; these read HLII…IGLE, VGVK…IVSI, PMRL…GVIL, and IGIA…VMIL.

This sequence belongs to the MgtC/SapB family.

The protein localises to the cell inner membrane. This is an uncharacterized protein from Haemophilus influenzae (strain ATCC 51907 / DSM 11121 / KW20 / Rd).